The following is a 354-amino-acid chain: Protein C42 (354 aa).

The Nuclear localization signal motif lies at 349-352 (KRKK).

This sequence belongs to the baculoviridae C42 protein family.

The protein localises to the host nucleus. The sequence is that of Protein C42 from Orgyia pseudotsugata (Douglas-fir tussock moth).